Consider the following 409-residue polypeptide: MERAVLRYKNSVISGLIINESNGLITLKASNGYNMTFDRSEVEFIERKKEESPERKSIEAVEKGQGDRKISVLATGGTIASRVDYETGAVSPVSDPELIFGGSDILTRFTVAVKPILNEFSENLKPADWIRIGQAVADESSEADGVVVAHGTDTMAYTSSALAFMFERMRVPVVFVGAQRSSDRPSSDSRENMQAAINFAGTDLGEVGISMHASTSDGHVSLLRSVRSRKMHTSRRDAFESIGIPPLAEYDGSVKFLIDYRRVSDTVEFRPDLDDRVSMIYFHPGLNAGDLENMIAEKHAVVILGTGLGHMAKDLIPVVKKYTADGNYAIMASQCIYGSTDLNVYSTGRELLAAGVIEAGNMVPEVAYVKAMYLLGQYPHDLFRDLFRKNMRGEIVERDLPVEIIKLGR.

The Asparaginase/glutaminase domain occupies 68 to 390; that stretch reads RKISVLATGG…DLFRDLFRKN (323 aa). Active-site residues include T78, T152, D153, and K230.

Belongs to the asparaginase 1 family. GatD subfamily. Heterodimer of GatD and GatE.

The catalysed reaction is L-glutamyl-tRNA(Gln) + L-glutamine + ATP + H2O = L-glutaminyl-tRNA(Gln) + L-glutamate + ADP + phosphate + H(+). Functionally, allows the formation of correctly charged Gln-tRNA(Gln) through the transamidation of misacylated Glu-tRNA(Gln) in organisms which lack glutaminyl-tRNA synthetase. The reaction takes place in the presence of glutamine and ATP through an activated gamma-phospho-Glu-tRNA(Gln). The GatDE system is specific for glutamate and does not act on aspartate. The sequence is that of Glutamyl-tRNA(Gln) amidotransferase subunit D from Thermoplasma acidophilum (strain ATCC 25905 / DSM 1728 / JCM 9062 / NBRC 15155 / AMRC-C165).